Consider the following 204-residue polypeptide: FMN-dependent NADH:quinone oxidoreductase (204 aa).

Residue Ser9 participates in FMN binding.

Belongs to the azoreductase type 1 family. Homodimer. Requires FMN as cofactor.

It carries out the reaction 2 a quinone + NADH + H(+) = 2 a 1,4-benzosemiquinone + NAD(+). The catalysed reaction is N,N-dimethyl-1,4-phenylenediamine + anthranilate + 2 NAD(+) = 2-(4-dimethylaminophenyl)diazenylbenzoate + 2 NADH + 2 H(+). In terms of biological role, quinone reductase that provides resistance to thiol-specific stress caused by electrophilic quinones. Also exhibits azoreductase activity. Catalyzes the reductive cleavage of the azo bond in aromatic azo compounds to the corresponding amines. This Thiobacillus denitrificans (strain ATCC 25259 / T1) protein is FMN-dependent NADH:quinone oxidoreductase.